The chain runs to 365 residues: Probable receptor-like protein kinase At2g47060 (365 aa).

Residues 18 to 48 (DYGGRHNQAKHFPPGNDARHHQASETAQKGP) form a disordered region. Residues 73–353 (FGSNSLIGEG…IVVKALQPLL (281 aa)) form the Protein kinase domain. Residues 79–87 (IGEGSYGRV) and Lys101 each bind ATP. Residue Tyr145 is modified to Phosphotyrosine. The active-site Proton acceptor is Asp203. Phosphoserine occurs at positions 207 and 237. Residues Thr238 and Thr243 each carry the phosphothreonine modification. Tyr251 is modified (phosphotyrosine).

This sequence belongs to the protein kinase superfamily. Ser/Thr protein kinase family.

The enzyme catalyses L-seryl-[protein] + ATP = O-phospho-L-seryl-[protein] + ADP + H(+). The catalysed reaction is L-threonyl-[protein] + ATP = O-phospho-L-threonyl-[protein] + ADP + H(+). The polypeptide is Probable receptor-like protein kinase At2g47060 (Arabidopsis thaliana (Mouse-ear cress)).